The following is a 438-amino-acid chain: Shikimate transporter (438 aa).

12 consecutive transmembrane segments (helical) span residues 28–48 (FAGA…AALV), 64–84 (LAAF…GVIF), 109–129 (ALIG…ILLV), 133–153 (AIQG…SVES), 168–188 (VGYG…SMMT), 193–213 (FLSW…LGAL), 255–275 (IIAL…FALN), 287–307 (LFLN…PCFA), 318–337 (VYIT…FMAL), 341–363 (SIFW…VVCV), 387–407 (VASV…ITYF), and 411–431 (WHSV…TALL).

It belongs to the major facilitator superfamily. Metabolite:H+ Symporter (MHS) family (TC 2.A.1.6) family.

It is found in the cell inner membrane. The catalysed reaction is shikimate(in) + H(+)(in) = shikimate(out) + H(+)(out). Functionally, involved in the uptake of shikimate, an intermediate in the aromatic amino acid biosynthetic pathway. The chain is Shikimate transporter from Escherichia coli (strain K12).